The primary structure comprises 701 residues: Polyribonucleotide nucleotidyltransferase (701 aa).

The Mg(2+) site is built by D487 and D493. Residues 554–613 (PTMIAMKIDTDKIRDVIGKGGATIRAICEETKASIDIEDDGSIKIFGETKEAAEAARQRV) enclose the KH domain. Residues 623–691 (GKIYVGKVER…NRGRIKLSIK (69 aa)) form the S1 motif domain.

The protein belongs to the polyribonucleotide nucleotidyltransferase family. Component of the RNA degradosome, which is a multiprotein complex involved in RNA processing and mRNA degradation. Mg(2+) serves as cofactor.

It is found in the cytoplasm. The catalysed reaction is RNA(n+1) + phosphate = RNA(n) + a ribonucleoside 5'-diphosphate. In terms of biological role, involved in mRNA degradation. Catalyzes the phosphorolysis of single-stranded polyribonucleotides processively in the 3'- to 5'-direction. In Pseudomonas putida (strain W619), this protein is Polyribonucleotide nucleotidyltransferase.